The following is a 139-amino-acid chain: Ribulose bisphosphate carboxylase small subunit (139 aa).

This sequence belongs to the RuBisCO small chain family. Heterohexadecamer of 8 large and 8 small subunits.

Its subcellular location is the plastid. It localises to the chloroplast. In terms of biological role, ruBisCO catalyzes two reactions: the carboxylation of D-ribulose 1,5-bisphosphate, the primary event in carbon dioxide fixation, as well as the oxidative fragmentation of the pentose substrate in the photorespiration process. Both reactions occur simultaneously and in competition at the same active site. Although the small subunit is not catalytic it is essential for maximal activity. The polypeptide is Ribulose bisphosphate carboxylase small subunit (Cylindrotheca sp. (strain N1) (Marine diatom)).